The following is a 103-amino-acid chain: Large ribosomal subunit protein eL30 (103 aa).

This sequence belongs to the eukaryotic ribosomal protein eL30 family.

This Methanothrix thermoacetophila (strain DSM 6194 / JCM 14653 / NBRC 101360 / PT) (Methanosaeta thermophila) protein is Large ribosomal subunit protein eL30.